The sequence spans 279 residues: Acetyl-coenzyme A carboxylase carboxyl transferase subunit beta (279 aa).

One can recognise a CoA carboxyltransferase N-terminal domain in the interval 27-279 (LFLACPYCGT…IVKLHHRTEI (253 aa)). Positions 31, 34, 49, and 52 each coordinate Zn(2+). The C4-type zinc finger occupies 31 to 52 (CPYCGTQMYNKQLGDYRVCAKC).

Belongs to the AccD/PCCB family. As to quaternary structure, acetyl-CoA carboxylase is a heterohexamer composed of biotin carboxyl carrier protein (AccB), biotin carboxylase (AccC) and two subunits each of ACCase subunit alpha (AccA) and ACCase subunit beta (AccD). Requires Zn(2+) as cofactor.

Its subcellular location is the cytoplasm. It carries out the reaction N(6)-carboxybiotinyl-L-lysyl-[protein] + acetyl-CoA = N(6)-biotinyl-L-lysyl-[protein] + malonyl-CoA. Its pathway is lipid metabolism; malonyl-CoA biosynthesis; malonyl-CoA from acetyl-CoA: step 1/1. Component of the acetyl coenzyme A carboxylase (ACC) complex. Biotin carboxylase (BC) catalyzes the carboxylation of biotin on its carrier protein (BCCP) and then the CO(2) group is transferred by the transcarboxylase to acetyl-CoA to form malonyl-CoA. This chain is Acetyl-coenzyme A carboxylase carboxyl transferase subunit beta, found in Leuconostoc citreum (strain KM20).